A 414-amino-acid polypeptide reads, in one-letter code: MTPPILIIGAGLSGLTISRILTNASIPNIVFEASTPDRSQGYAISLREWGYTSLLTALGDLPLRSLTRGVAPDRILGGTGWIDQALRDNHTGNLLVAPDPEAKQCIVRANRNALRTWIADSGDEEVDIRYGHRLRSVQGSMGNVTATFDNGAKYQGSLVIAADGVHSSVRSQILPHVSPDIVPVVVYHGELELPRKEFDNLIRPHSGPSNILAGVGDGFNTPITVCNITPTHVHLDWSYSRPSTENKENKDPLYRPHVSAAEAKQIPPALLEEIASRDLARPWSQLLNAEALPTHRVFNWVSRCVSVTREDVNAAQKQGVVFIGDSWHAMPIFGGEGGNHALVDAVELAEALTGKEGNLDAAVTGYYDRAWRRCQEAVRRSRQRFFQLHRPMREWMEIAEKKKMMAAMKGVEAH.

Residues glutamate 32, alanine 43, arginine 115, aspartate 325, and glycine 338 each contribute to the FAD site.

This sequence belongs to the paxM FAD-dependent monooxygenase family. FAD serves as cofactor.

The enzyme catalyses 3-(2,4-dioxopentyl)-3,6,8,9-tetrahydroxy-1-oxo-1,2,3,4-tetrahydroanthracene-2-carboxyl-[ACP] + NADPH + O2 + H(+) = 3-(2,4-dioxopentyl)-2,3,6,8,9-pentahydroxy-1-oxo-1,2,3,4-tetrahydroanthracene-2-carboxyl-[ACP] + NADP(+) + H2O. It participates in secondary metabolite biosynthesis. Functionally, FAD-dependent monooxygenase; part of the gene cluster that mediates the biosynthesis of the linear tetracyclic TAN-1612 neuropeptide Y receptor antagonist. The decaketide backbone of TAN-1612 is synthesized by the non-reducing polyketide synthase adaA via condensation of one acetyl-CoA starter unit with 9 malonyl-CoA units. The FAD-dependent monooxygenase adaC then performs hydroxylation at C2 while the polaketide chain is still attached to the NRPKS adaA. The alpha-hydroxylation step at C2 appears to be crucial for the following C18-C1 Claisen cyclization and release of the C9-hydroxyl version of TAN-1612 from the NRPKS adaA, two steps performed by the lactamase-like protein adaB. Finally, the O-methyltransferase adaD performs the C9 O-methylation to complete the biosynthesis of TAN-1612. This Aspergillus niger protein is FAD-dependent monooxygenase adaC.